The following is a 258-amino-acid chain: Tryptophan synthase alpha chain (258 aa).

Residues E47 and D58 each act as proton acceptor in the active site.

The protein belongs to the TrpA family. In terms of assembly, tetramer of two alpha and two beta chains.

It carries out the reaction (1S,2R)-1-C-(indol-3-yl)glycerol 3-phosphate + L-serine = D-glyceraldehyde 3-phosphate + L-tryptophan + H2O. Its pathway is amino-acid biosynthesis; L-tryptophan biosynthesis; L-tryptophan from chorismate: step 5/5. The alpha subunit is responsible for the aldol cleavage of indoleglycerol phosphate to indole and glyceraldehyde 3-phosphate. The chain is Tryptophan synthase alpha chain from Bacillus cereus (strain ATCC 14579 / DSM 31 / CCUG 7414 / JCM 2152 / NBRC 15305 / NCIMB 9373 / NCTC 2599 / NRRL B-3711).